The sequence spans 770 residues: POU domain, class 2, transcription factor 1 (770 aa).

The segment covering 1–26 has biased composition (polar residues); that stretch reads MNNPSETNKSSMESEDASTGTQTNGL. Disordered stretches follow at residues 1–33, 68–97, 262–285, and 357–385; these read MNNP…KQPV, LNVQ…VQSA, VQTL…EPSD, and LSSD…RRKK. Residues 80–97 are compositionally biased toward low complexity; sequence DSQQSSQPSSQPPSVQSA. The segment covering 262–272 has biased composition (polar residues); it reads VQTLPQSQSTP. Phosphothreonine occurs at positions 271 and 277. In terms of domain architecture, POU-specific spans 281–355; the sequence is EEPSDLEELE…LLEKWLNDAE (75 aa). Phosphoserine is present on Ser284. A compositionally biased stretch (low complexity) spans 357 to 372; the sequence is LSSDSTASSPSALNSP. Residues 382 to 441 constitute a DNA-binding region (homeobox); that stretch reads RRKKRTSIETNIRVALEKSFMENQKPTSEDITLIAEQLNMEKEVIRVWFCNRRQKEKRIN. Phosphoserine occurs at positions 388 and 451. A compositionally biased stretch (low complexity) spans 519-580; it reads TTTAGTTDST…TNTTQTTSTP (62 aa). A disordered region spans residues 519-589; sequence TTTAGTTDST…PLPSPLGASQ (71 aa).

The protein belongs to the POU transcription factor family. Class-2 subfamily. Interacts with POU2AF1; the interaction increases POU2F1 transactivation activity. Interacts with NR3C1, AR, PGR and HCFC1. In terms of processing, phosphorylated by PRKDC. As to expression, ubiquitously expressed. However, isoforms 4 and 5 are only expressed in lymphocytes.

It localises to the nucleus. In terms of biological role, transcription factor that binds to the octamer motif (5'-ATTTGCAT-3') and activates the promoters of the genes for some small nuclear RNAs (snRNA) and of genes such as those for histone H2B and immunoglobulins. Modulates transcription transactivation by NR3C1, AR and PGR. In Mus musculus (Mouse), this protein is POU domain, class 2, transcription factor 1 (Pou2f1).